The primary structure comprises 150 residues: Large ribosomal subunit protein uL15 (150 aa).

The span at methionine 1–asparagine 15 shows a compositional bias: polar residues. Residues methionine 1–glutamate 52 form a disordered region. Gly residues predominate over residues glycine 23–serine 32.

The protein belongs to the universal ribosomal protein uL15 family. In terms of assembly, part of the 50S ribosomal subunit.

Its function is as follows. Binds to the 23S rRNA. The sequence is that of Large ribosomal subunit protein uL15 from Flavobacterium psychrophilum (strain ATCC 49511 / DSM 21280 / CIP 103535 / JIP02/86).